The following is a 230-amino-acid chain: Biosynthetic peptidoglycan transglycosylase (230 aa).

Residues 11–31 (VLLVLVALFVLYQLWIFTLVL) traverse the membrane as a helical segment.

The protein belongs to the glycosyltransferase 51 family.

It is found in the cell inner membrane. It carries out the reaction [GlcNAc-(1-&gt;4)-Mur2Ac(oyl-L-Ala-gamma-D-Glu-L-Lys-D-Ala-D-Ala)](n)-di-trans,octa-cis-undecaprenyl diphosphate + beta-D-GlcNAc-(1-&gt;4)-Mur2Ac(oyl-L-Ala-gamma-D-Glu-L-Lys-D-Ala-D-Ala)-di-trans,octa-cis-undecaprenyl diphosphate = [GlcNAc-(1-&gt;4)-Mur2Ac(oyl-L-Ala-gamma-D-Glu-L-Lys-D-Ala-D-Ala)](n+1)-di-trans,octa-cis-undecaprenyl diphosphate + di-trans,octa-cis-undecaprenyl diphosphate + H(+). Its pathway is cell wall biogenesis; peptidoglycan biosynthesis. Functionally, peptidoglycan polymerase that catalyzes glycan chain elongation from lipid-linked precursors. The polypeptide is Biosynthetic peptidoglycan transglycosylase (Aromatoleum aromaticum (strain DSM 19018 / LMG 30748 / EbN1) (Azoarcus sp. (strain EbN1))).